The chain runs to 441 residues: Methylenetetrahydrofolate--tRNA-(uracil-5-)-methyltransferase TrmFO (441 aa).

11–16 (GGGLAG) serves as a coordination point for FAD.

Belongs to the MnmG family. TrmFO subfamily. FAD serves as cofactor.

The protein localises to the cytoplasm. The catalysed reaction is uridine(54) in tRNA + (6R)-5,10-methylene-5,6,7,8-tetrahydrofolate + NADH + H(+) = 5-methyluridine(54) in tRNA + (6S)-5,6,7,8-tetrahydrofolate + NAD(+). It catalyses the reaction uridine(54) in tRNA + (6R)-5,10-methylene-5,6,7,8-tetrahydrofolate + NADPH + H(+) = 5-methyluridine(54) in tRNA + (6S)-5,6,7,8-tetrahydrofolate + NADP(+). In terms of biological role, catalyzes the folate-dependent formation of 5-methyl-uridine at position 54 (M-5-U54) in all tRNAs. The protein is Methylenetetrahydrofolate--tRNA-(uracil-5-)-methyltransferase TrmFO of Syntrophus aciditrophicus (strain SB).